Here is a 396-residue protein sequence, read N- to C-terminus: MAVRIKLKPGREKSLERRHPWVFSNGIHNVKGKLEAGDTVDVVAHDGHWLGRGAWSPESQIQVRIWTFDREEEIDREFFKRRILRAQAGRDDLIREQGLTGYRLIAAESDGLPGITIDKYANVLVCQLLSMGADVWRDTIVDVLAELYPDCAIYERSDVDSRKKEGLASTMGLLHGTLPEMPVIIEENGIKIAVDVTKGHKTGFYLDQRDNRAMAARFVKGKSVLNCFCYTGTFGLYAAKAGAASIENVDVSALALDTARLNMRVNGLNDDNVHYNEADVFKLLRQYRDEGKTFDVIVLDPPKFADNKSQLNGACRGYKDINMIALQLLNPGGVLLTFSCSGLMPADLFQKIVADAALDAKREIQFIERLSQASDHPIGSAFPEGFYLKGLVARVW.

In terms of domain architecture, PUA spans 2–79; sequence AVRIKLKPGR…REEEIDREFF (78 aa).

This sequence belongs to the methyltransferase superfamily. RlmI family.

It is found in the cytoplasm. It carries out the reaction cytidine(1962) in 23S rRNA + S-adenosyl-L-methionine = 5-methylcytidine(1962) in 23S rRNA + S-adenosyl-L-homocysteine + H(+). Its function is as follows. Specifically methylates the cytosine at position 1962 (m5C1962) of 23S rRNA. This Shewanella sp. (strain MR-4) protein is Ribosomal RNA large subunit methyltransferase I.